The following is a 229-amino-acid chain: ATP synthase subunit a (229 aa).

Helical transmembrane passes span 14-34 (LIAI…ALIL), 68-88 (YFPF…LGLF), 98-118 (IVVT…GGLW), 124-144 (FLSI…LVLI), 157-179 (GVRL…GFGF), and 189-209 (NIFP…VAVI).

It belongs to the ATPase A chain family. As to quaternary structure, F-type ATPases have 2 components, CF(1) - the catalytic core - and CF(0) - the membrane proton channel. CF(1) has five subunits: alpha(3), beta(3), gamma(1), delta(1), epsilon(1). CF(0) has three main subunits: a, b and c.

Its subcellular location is the mitochondrion inner membrane. Functionally, mitochondrial membrane ATP synthase (F(1)F(0) ATP synthase or Complex V) produces ATP from ADP in the presence of a proton gradient across the membrane which is generated by electron transport complexes of the respiratory chain. F-type ATPases consist of two structural domains, F(1) - containing the extramembraneous catalytic core and F(0) - containing the membrane proton channel, linked together by a central stalk and a peripheral stalk. During catalysis, ATP synthesis in the catalytic domain of F(1) is coupled via a rotary mechanism of the central stalk subunits to proton translocation. Key component of the proton channel; it may play a direct role in the translocation of protons across the membrane. The chain is ATP synthase subunit a (ATPASE6) from Metridium senile (Brown sea anemone).